A 289-amino-acid chain; its full sequence is tRNA(Ile)-lysidine synthase (289 aa).

11–16 (SGGPDS) lines the ATP pocket.

This sequence belongs to the tRNA(Ile)-lysidine synthase family.

The protein localises to the cytoplasm. It catalyses the reaction cytidine(34) in tRNA(Ile2) + L-lysine + ATP = lysidine(34) in tRNA(Ile2) + AMP + diphosphate + H(+). Functionally, ligates lysine onto the cytidine present at position 34 of the AUA codon-specific tRNA(Ile) that contains the anticodon CAU, in an ATP-dependent manner. Cytidine is converted to lysidine, thus changing the amino acid specificity of the tRNA from methionine to isoleucine. This Mycoplasma pneumoniae (strain ATCC 29342 / M129 / Subtype 1) (Mycoplasmoides pneumoniae) protein is tRNA(Ile)-lysidine synthase.